The following is a 172-amino-acid chain: uncharacterized protein (172 aa).

This sequence belongs to the flavoredoxin family. Requires FMN as cofactor.

This is an uncharacterized protein from Pyrococcus abyssi (strain GE5 / Orsay).